A 325-amino-acid chain; its full sequence is Glutarate 2-hydroxylase (325 aa).

Fe cation contacts are provided by H160, D162, and H292.

Belongs to the glutarate hydroxylase family. In terms of assembly, homotetramer. It depends on Fe(2+) as a cofactor.

It catalyses the reaction glutarate + 2-oxoglutarate + O2 = (S)-2-hydroxyglutarate + succinate + CO2. Its pathway is amino-acid degradation. Its function is as follows. Acts as an alpha-ketoglutarate-dependent dioxygenase catalyzing hydroxylation of glutarate (GA) to L-2-hydroxyglutarate (L2HG). Functions in a L-lysine degradation pathway that proceeds via cadaverine, glutarate and L-2-hydroxyglutarate. This is Glutarate 2-hydroxylase from Salmonella newport (strain SL254).